Consider the following 220-residue polypeptide: Cytidylate kinase (220 aa).

10–18 (GPASSGKST) is a binding site for ATP.

Belongs to the cytidylate kinase family. Type 1 subfamily.

Its subcellular location is the cytoplasm. The catalysed reaction is CMP + ATP = CDP + ADP. It catalyses the reaction dCMP + ATP = dCDP + ADP. This chain is Cytidylate kinase, found in Lactococcus lactis subsp. cremoris (strain MG1363).